Here is a 229-residue protein sequence, read N- to C-terminus: Putative N-acetylmannosamine-6-phosphate 2-epimerase (229 aa).

It belongs to the NanE family.

It catalyses the reaction an N-acyl-D-glucosamine 6-phosphate = an N-acyl-D-mannosamine 6-phosphate. It participates in amino-sugar metabolism; N-acetylneuraminate degradation; D-fructose 6-phosphate from N-acetylneuraminate: step 3/5. Converts N-acetylmannosamine-6-phosphate (ManNAc-6-P) to N-acetylglucosamine-6-phosphate (GlcNAc-6-P). In Escherichia coli O7:K1 (strain IAI39 / ExPEC), this protein is Putative N-acetylmannosamine-6-phosphate 2-epimerase.